The primary structure comprises 133 residues: Large ribosomal subunit protein uL15 (133 aa).

The interval 1–64 is disordered; sequence MGLENLKPAK…QPLQRRLPKI (64 aa).

It belongs to the universal ribosomal protein uL15 family. Part of the 50S ribosomal subunit.

Binds to the 23S rRNA. In Helicobacter pylori (strain Shi470), this protein is Large ribosomal subunit protein uL15.